Here is a 162-residue protein sequence, read N- to C-terminus: Large ribosomal subunit protein bL17 (162 aa).

The interval 126–162 (KKEEVKTKSRRGGKAKKAEPTTEAPANTTEETTDSAE) is disordered. The segment covering 146–155 (TTEAPANTTE) has biased composition (low complexity).

The protein belongs to the bacterial ribosomal protein bL17 family. In terms of assembly, part of the 50S ribosomal subunit. Contacts protein L32.

The protein is Large ribosomal subunit protein bL17 of Flavobacterium psychrophilum (strain ATCC 49511 / DSM 21280 / CIP 103535 / JIP02/86).